The following is a 155-amino-acid chain: HTH-type transcriptional regulator IscR (155 aa).

The HTH rrf2-type domain maps to 2 to 136 (KLSTKGRYAM…HQTRLSDIIK (135 aa)). The segment at residues 30-53 (LAEVSKRQDISLPYLEQLFVKLRR) is a DNA-binding region (H-T-H motif). The interval 141-145 (PCPAV) is heme regulatory motif (HRM). Cysteine 142 is a binding site for [2Fe-2S] cluster.

It depends on [2Fe-2S] cluster as a cofactor.

Its function is as follows. Regulates the transcription of several operons and genes involved in the biogenesis of Fe-S clusters and Fe-S-containing proteins. Functions as a transcriptional repressor of genes involved in iron metabolism by directly binding to the promoter region of genes preceded by the Iron-Rhodo-box motif. Binds to iscR and hemP promoter regions independently of an Fe-S cluster, but their transcriptional repression is Fe-S cluster-dependent. Seems to activate some target genes in a Fe-S cluster-independent manner. Negatively regulates its own transcription in the presence of iron only. The protein is HTH-type transcriptional regulator IscR of Cereibacter sphaeroides (strain ATCC 17023 / DSM 158 / JCM 6121 / CCUG 31486 / LMG 2827 / NBRC 12203 / NCIMB 8253 / ATH 2.4.1.) (Rhodobacter sphaeroides).